The primary structure comprises 1446 residues: DNA polymerase III PolC-type (1446 aa).

Residues 425 to 581 (YVIFDVETTG…ADAESTGYLL (157 aa)) enclose the Exonuclease domain.

The protein belongs to the DNA polymerase type-C family. PolC subfamily.

Its subcellular location is the cytoplasm. It catalyses the reaction DNA(n) + a 2'-deoxyribonucleoside 5'-triphosphate = DNA(n+1) + diphosphate. Functionally, required for replicative DNA synthesis. This DNA polymerase also exhibits 3' to 5' exonuclease activity. The chain is DNA polymerase III PolC-type from Latilactobacillus sakei subsp. sakei (strain 23K) (Lactobacillus sakei subsp. sakei).